The following is a 291-amino-acid chain: MEITASLVKELRERTGAGMMECKKALTEANGDIDAAAEAMRKSGAAKADKKADRVAAEGRLGLAQDGGKAVLVEVNSETDFVANDDNFKSFVNAVAAAALASGATDVEAVKAAKLADGRTVEEARATAVQTLGENIQIRRMVNVDTTGNIGAYVHTNGKVGVLVDLIGGDVELARGLAMHVAALKPPHNKAADVPADFVEKEKEIELAKMSEKDKAKPADILEKIISGKINKIVSDVTLYGQTYVLGDTTVEQVVKAAGADVAGFKLLIVGEGIEKVVEDYAAEVAKAMQV.

Positions 79-82 are involved in Mg(2+) ion dislocation from EF-Tu; sequence TDFV.

It belongs to the EF-Ts family.

The protein localises to the cytoplasm. Its function is as follows. Associates with the EF-Tu.GDP complex and induces the exchange of GDP to GTP. It remains bound to the aminoacyl-tRNA.EF-Tu.GTP complex up to the GTP hydrolysis stage on the ribosome. The protein is Elongation factor Ts of Stenotrophomonas maltophilia (strain K279a).